Here is a 361-residue protein sequence, read N- to C-terminus: Probable cysteine protease RD19B (361 aa).

Residues 1 to 24 (MDYHLRVLFSVSLIFVFVSVSVCG) form the signal peptide. Residues 25–131 (DEDVLIRQVV…NQAPILPTQN (107 aa)) constitute a propeptide, activation peptide. Intrachain disulfides connect Cys-153/Cys-203 and Cys-187/Cys-237. Residue Cys-156 is part of the active site. Asn-250 is a glycosylation site (N-linked (GlcNAc...) asparagine). An intrachain disulfide couples Cys-293 to Cys-347. Active-site residues include His-299 and Asn-326.

This sequence belongs to the peptidase C1 family.

It localises to the lytic vacuole. Probable thiol protease. This is Probable cysteine protease RD19B from Arabidopsis thaliana (Mouse-ear cress).